We begin with the raw amino-acid sequence, 650 residues long: DSPGGASDAQKTFDVNSLMPVKYEEIRDPHLKELSLSFDPLSGHYDDDGVSAKRLMKELNEHRLLQQSHWFSLFNPRTREEDLMLYNVDEHSGNWDTFAGNAAFFRVHVNEGFFVYASYSVVIHSKLTQHVVLPPLYEVTPHLFTNSEVIQKAYAAKMTQTPTKIFAHFTGSKSNPEQRVAYFGEDIGMNTHHVTWHLEFPFWWDDAHYDHHIERKGESCSSWVHHQLTVRFDAERLSNYLDPVRELHWDDVIHEGFAPHTSYKYGGYFPDRPDNVNFEDVDGVARVRDMLLFEERIQDAIAHGYLRYNGSTINIRDNHGIDVLGDVFESSMYSPRQDYYGALHNQAHRVLGSQADPHGKFALPPGVLEHFETATRDPAFFRLHKYMDNIFRKHKDSLTPYTKNELKFEGVNIDSIYEKGNLETYFESFMYTGVNIMLLTNDVDDVDIATYITDLAHKELSFQEDVTNEGDIGVLETVRIFAWPHIDDDHVEFSFNEGRWDVIEMDKFWVMLEHGHHSIDRSSFDSTVTIPDRPSFHDIEDRTSEAIPHGKELHIEEFESVTGLPNRFLIPKGLVKGKDMDVMVAVTSGEGLAAVEGLHRSANFAHHGCPEVRYPDKRPHGYPLYRPVDDERIITGVTNFKHIQVKVFHH.

O-linked (GalNAc...) serine glycosylation is found at S120 and S172. Cu cation is bound by residues H193, H197, and H225. The N-linked (GlcNAc...) asparagine glycan is linked to N309. Cu cation-binding residues include H344, H348, and H384.

It belongs to the tyrosinase family. Hemocyanin subfamily. In terms of assembly, hexamer of a number of different chains, of which five have been identified. Contains one N-glycosylated and three O-glycosylated residues. The position of one of the O-glycosylated residues has not been determined. In terms of processing, O-linked glycan at Ser-120 may be composed of two GalNAc, three Gal, and two N-acetylneuraminic acid units for a total 1525-Da MW. As to expression, hemolymph.

The protein localises to the secreted. The protein resides in the extracellular space. Hemocyanins are copper-containing oxygen carriers occurring freely dissolved in the hemolymph of many mollusks and arthropods. The protein is Hemocyanin subunit 2 of Carcinus aestuarii (Green crab).